A 229-amino-acid chain; its full sequence is Cytidylate kinase (229 aa).

ATP is bound at residue 12 to 20; sequence GPSGAGKGT.

Belongs to the cytidylate kinase family. Type 1 subfamily.

It is found in the cytoplasm. The enzyme catalyses CMP + ATP = CDP + ADP. It carries out the reaction dCMP + ATP = dCDP + ADP. This chain is Cytidylate kinase, found in Pseudomonas aeruginosa (strain UCBPP-PA14).